The chain runs to 197 residues: Holliday junction branch migration complex subunit RuvA (197 aa).

The interval 1–61 (MYEYFEGTIT…ENGMTLYGFK (61 aa)) is domain I. The segment at 62-140 (SQQDKVLFNK…NYVAENLFTE (79 aa)) is domain II. The segment at 141 to 150 (DEPVESVFPA) is flexible linker. The segment at 150–197 (ALEDALLALGALGYSQKEVDRIKPKLKKLPEMSADEYIKQGLGFLLKK) is domain III.

Belongs to the RuvA family. Homotetramer. Forms an RuvA(8)-RuvB(12)-Holliday junction (HJ) complex. HJ DNA is sandwiched between 2 RuvA tetramers; dsDNA enters through RuvA and exits via RuvB. An RuvB hexamer assembles on each DNA strand where it exits the tetramer. Each RuvB hexamer is contacted by two RuvA subunits (via domain III) on 2 adjacent RuvB subunits; this complex drives branch migration. In the full resolvosome a probable DNA-RuvA(4)-RuvB(12)-RuvC(2) complex forms which resolves the HJ.

The protein localises to the cytoplasm. Its function is as follows. The RuvA-RuvB-RuvC complex processes Holliday junction (HJ) DNA during genetic recombination and DNA repair, while the RuvA-RuvB complex plays an important role in the rescue of blocked DNA replication forks via replication fork reversal (RFR). RuvA specifically binds to HJ cruciform DNA, conferring on it an open structure. The RuvB hexamer acts as an ATP-dependent pump, pulling dsDNA into and through the RuvAB complex. HJ branch migration allows RuvC to scan DNA until it finds its consensus sequence, where it cleaves and resolves the cruciform DNA. In Lactobacillus delbrueckii subsp. bulgaricus (strain ATCC BAA-365 / Lb-18), this protein is Holliday junction branch migration complex subunit RuvA.